We begin with the raw amino-acid sequence, 174 residues long: uncharacterized protein (174 aa).

This sequence belongs to the IIV-6 196R family.

This is an uncharacterized protein from Acheta domesticus (House cricket).